The following is a 292-amino-acid chain: Ribosomal protein L11 methyltransferase (292 aa).

Positions 136, 159, 181, and 228 each coordinate S-adenosyl-L-methionine.

Belongs to the methyltransferase superfamily. PrmA family.

The protein resides in the cytoplasm. The catalysed reaction is L-lysyl-[protein] + 3 S-adenosyl-L-methionine = N(6),N(6),N(6)-trimethyl-L-lysyl-[protein] + 3 S-adenosyl-L-homocysteine + 3 H(+). Its function is as follows. Methylates ribosomal protein L11. In Rhizobium etli (strain CIAT 652), this protein is Ribosomal protein L11 methyltransferase.